Consider the following 223-residue polypeptide: Immediate early response gene 2 protein (223 aa).

Methionine 1 is modified (N-acetylmethionine). Residues 63–172 are disordered; it reads AALPSDPRLH…PPAQAEGAFP (110 aa). The segment covering 69–78 has biased composition (basic and acidic residues); that stretch reads PRLHPPREAE. Over residues 125 to 138 the composition is skewed to low complexity; that stretch reads SSLSDGGDAGLVPS.

This sequence belongs to the IER family. As to expression, expressed in activated T-cells (at protein level). Expression increases in metastatic tumor cells (at protein level).

It is found in the cytoplasm. It localises to the nucleus. In terms of biological role, DNA-binding protein that seems to act as a transcription factor. Involved in the regulation of neuronal differentiation, acts upon JNK-signaling pathway activation and plays a role in neurite outgrowth in hippocampal cells. May mediate with FIBP FGF-signaling in the establishment of laterality in the embryo. Promotes cell motility, seems to stimulate tumor metastasis. This chain is Immediate early response gene 2 protein, found in Homo sapiens (Human).